A 332-amino-acid chain; its full sequence is Aquaporin-7-1 (332 aa).

The Cytoplasmic segment spans residues 1-66 (MSGQHQITEQ…RHAIRMPMAE (66 aa)). A helical membrane pass occupies residues 67–87 (FFGVALLIIFGAGSACQVVLS). Over 88–100 (TNPNVASSDRGSF) the chain is Extracellular. Residues 101-121 (LSINLGWAIGIAMGAWVSGGI) traverse the membrane as a helical segment. Residues 122 to 144 (SGGHINPAITIAMATYRGFPWRR) lie on the Cytoplasmic side of the membrane. The short motif at 127-129 (NPA) is the NPA 1 element. The helical transmembrane segment at 145-165 (VPSYIFAQVLGGVVGAALVYA) threads the bilayer. Residues 166 to 199 (NYIHAIDIFEGGRHVRTQATASLFATYALPYMTQ) are Extracellular-facing. A helical membrane pass occupies residues 200 to 220 (VSCFFSEFLATAVLSMMVLAL). The Cytoplasmic segment spans residues 221–230 (TDNRNGAPTN). A helical membrane pass occupies residues 231–251 (GLLPFALFVLFIGLGASLGME). The Extracellular segment spans residues 252-283 (TAYALNPARDFGPRLFLAMSGYGKALFNYRSQ). The short motif at 257–259 (NPA) is the NPA 2 element. The chain crosses the membrane as a helical span at residues 284–304 (YWLWAPIIAPVLGAQAGGLLY). The Cytoplasmic portion of the chain corresponds to 305-332 (DTFLYDGDNSPIKWRRASSQECQLAEVV).

This sequence belongs to the MIP/aquaporin (TC 1.A.8) family.

Its subcellular location is the membrane. It catalyses the reaction H2O(in) = H2O(out). In terms of biological role, water channel required to facilitate the transport of water across membranes. Does not mediate the transport carbon dioxide across the membrane. In Laccaria bicolor (Bicoloured deceiver), this protein is Aquaporin-7-1.